Reading from the N-terminus, the 217-residue chain is Redox-sensing transcriptional repressor Rex (217 aa).

Residues 17–56 (RYLRYVEDLLNHDVLRISSSELSQRMGYTASQVRQDFNNF) constitute a DNA-binding region (H-T-H motif). 91 to 96 (GVGNLG) serves as a coordination point for NAD(+).

Belongs to the transcriptional regulatory Rex family. In terms of assembly, homodimer.

It is found in the cytoplasm. Functionally, modulates transcription in response to changes in cellular NADH/NAD(+) redox state. In Caldicellulosiruptor bescii (strain ATCC BAA-1888 / DSM 6725 / KCTC 15123 / Z-1320) (Anaerocellum thermophilum), this protein is Redox-sensing transcriptional repressor Rex.